The primary structure comprises 349 residues: GTPase Obg (349 aa).

Residues 1–159 (MKFLDEAKVY…RWIWLRLKLI (159 aa)) form the Obg domain. The OBG-type G domain maps to 160 to 327 (ADAGLVGLPN…ALRALVEVIG (168 aa)). GTP-binding positions include 166 to 173 (GLPNAGKS), 191 to 195 (FTTLH), 212 to 215 (DIPG), 279 to 282 (NKID), and 308 to 310 (SGV). Residues S173 and T193 each contribute to the Mg(2+) site.

This sequence belongs to the TRAFAC class OBG-HflX-like GTPase superfamily. OBG GTPase family. As to quaternary structure, monomer. Mg(2+) serves as cofactor.

Its subcellular location is the cytoplasm. Functionally, an essential GTPase which binds GTP, GDP and possibly (p)ppGpp with moderate affinity, with high nucleotide exchange rates and a fairly low GTP hydrolysis rate. Plays a role in control of the cell cycle, stress response, ribosome biogenesis and in those bacteria that undergo differentiation, in morphogenesis control. This is GTPase Obg from Rhodopseudomonas palustris (strain BisB18).